The chain runs to 119 residues: Beta-2-microglobulin (119 aa).

The signal sequence occupies residues 1–20 (MARSVTVIFLVLVSLAVVLA). Positions 25-114 (PQIQVYSRHP…VTLKEPKTVT (90 aa)) constitute an Ig-like C1-type domain. A disulfide bridge links Cys45 with Cys100.

It belongs to the beta-2-microglobulin family. Heterodimer of an alpha chain and a beta chain. Beta-2-microglobulin is the beta-chain of major histocompatibility complex class I molecules. Forms a heterotrimer with MR1 and a metabolite antigen.

It is found in the secreted. Functionally, component of the class I major histocompatibility complex (MHC). Involved in the presentation of peptide antigens to the immune system. This chain is Beta-2-microglobulin (B2m), found in Rattus norvegicus (Rat).